A 38-amino-acid polypeptide reads, in one-letter code: Cytochrome b6-f complex subunit 5 (38 aa).

The helical transmembrane segment at 5–25 (LLSGIVLGLIPITLAGLFVTA) threads the bilayer.

This sequence belongs to the PetG family. The 4 large subunits of the cytochrome b6-f complex are cytochrome b6, subunit IV (17 kDa polypeptide, PetD), cytochrome f and the Rieske protein, while the 4 small subunits are PetG, PetL, PetM and PetN. The complex functions as a dimer.

Its subcellular location is the plastid. The protein resides in the chloroplast thylakoid membrane. Functionally, component of the cytochrome b6-f complex, which mediates electron transfer between photosystem II (PSII) and photosystem I (PSI), cyclic electron flow around PSI, and state transitions. PetG is required for either the stability or assembly of the cytochrome b6-f complex. The protein is Cytochrome b6-f complex subunit 5 of Adiantum capillus-veneris (Maidenhair fern).